The chain runs to 366 residues: Probable UDP-arabinopyranose mutase 2 (366 aa).

The DXD motif motif lies at 104-106 (DDD). Residue Arg-152 is glycosylated (N-linked (Glc...) arginine).

This sequence belongs to the RGP family. As to quaternary structure, homopentamer or homohexamer. It depends on Mn(2+) as a cofactor. Mg(2+) is required as a cofactor. Reversibly glycosylated by UDP-glucose, UDP-xylose and UDP-galactose, but not UDP-mannose. In terms of tissue distribution, expressed in all tissues tested, including root, tuber, leaf, petiole, shoot, stolon and stem.

It localises to the secreted. It is found in the cell wall. The protein resides in the cell junction. Its subcellular location is the plasmodesma. The protein localises to the golgi apparatus. It catalyses the reaction UDP-beta-L-arabinofuranose = UDP-beta-L-arabinopyranose. Probable UDP-L-arabinose mutase involved in the biosynthesis of cell wall non-cellulosic polysaccharides. Was initially shown to possess an autoglycosylating activity which is dependent on the presence of UDP-glucose and manganese. In Solanum tuberosum (Potato), this protein is Probable UDP-arabinopyranose mutase 2.